A 1403-amino-acid polypeptide reads, in one-letter code: DNA-directed RNA polymerase subunit beta' (1403 aa).

Residues C71, C73, C86, and C89 each contribute to the Zn(2+) site. Residues D462, D464, and D466 each contribute to the Mg(2+) site. The Zn(2+) site is built by C820, C893, C900, and C903.

This sequence belongs to the RNA polymerase beta' chain family. As to quaternary structure, the RNAP catalytic core consists of 2 alpha, 1 beta, 1 beta' and 1 omega subunit. When a sigma factor is associated with the core the holoenzyme is formed, which can initiate transcription. Mg(2+) is required as a cofactor. Requires Zn(2+) as cofactor.

It catalyses the reaction RNA(n) + a ribonucleoside 5'-triphosphate = RNA(n+1) + diphosphate. Functionally, DNA-dependent RNA polymerase catalyzes the transcription of DNA into RNA using the four ribonucleoside triphosphates as substrates. In Methylobacterium radiotolerans (strain ATCC 27329 / DSM 1819 / JCM 2831 / NBRC 15690 / NCIMB 10815 / 0-1), this protein is DNA-directed RNA polymerase subunit beta'.